The chain runs to 311 residues: 4-hydroxy-tetrahydrodipicolinate synthase (311 aa).

Residue Thr51 participates in pyruvate binding. Tyr140 (proton donor/acceptor) is an active-site residue. The active-site Schiff-base intermediate with substrate is the Lys168. Ile209 lines the pyruvate pocket.

Belongs to the DapA family. As to quaternary structure, homotetramer; dimer of dimers.

The protein localises to the cytoplasm. It catalyses the reaction L-aspartate 4-semialdehyde + pyruvate = (2S,4S)-4-hydroxy-2,3,4,5-tetrahydrodipicolinate + H2O + H(+). The protein operates within amino-acid biosynthesis; L-lysine biosynthesis via DAP pathway; (S)-tetrahydrodipicolinate from L-aspartate: step 3/4. In terms of biological role, catalyzes the condensation of (S)-aspartate-beta-semialdehyde [(S)-ASA] and pyruvate to 4-hydroxy-tetrahydrodipicolinate (HTPA). This Streptococcus pneumoniae (strain Taiwan19F-14) protein is 4-hydroxy-tetrahydrodipicolinate synthase.